Here is a 554-residue protein sequence, read N- to C-terminus: Phenylalanine--tRNA ligase beta subunit (554 aa).

In terms of domain architecture, B5 spans 274–351; that stretch reads LTPDSAEITI…INYGYENFNG (78 aa). Mg(2+) contacts are provided by aspartate 329, aspartate 335, and aspartate 339.

It belongs to the phenylalanyl-tRNA synthetase beta subunit family. Type 2 subfamily. As to quaternary structure, tetramer of two alpha and two beta subunits. Requires Mg(2+) as cofactor.

It localises to the cytoplasm. The enzyme catalyses tRNA(Phe) + L-phenylalanine + ATP = L-phenylalanyl-tRNA(Phe) + AMP + diphosphate + H(+). This is Phenylalanine--tRNA ligase beta subunit from Methanococcus aeolicus (strain ATCC BAA-1280 / DSM 17508 / OCM 812 / Nankai-3).